A 325-amino-acid polypeptide reads, in one-letter code: Melanocortin receptor 5 (325 aa).

Residues 1-37 lie on the Extracellular side of the membrane; sequence MNSSFHLHFLDLGLNTTDGNLSGLSVQNASSLCEDMG. 4 N-linked (GlcNAc...) asparagine glycosylation sites follow: Asn-2, Asn-15, Asn-20, and Asn-28. Residues 38-61 traverse the membrane as a helical segment; the sequence is IAVEVFLALGLISLLENILVIGAI. Residues 62–73 are Cytoplasmic-facing; it reads VRNRNLHTPMYF. The helical transmembrane segment at 74 to 97 threads the bilayer; that stretch reads FVGSLAVADMLVSLSNSWETITIY. Residues 98–114 are Extracellular-facing; that stretch reads LLTNKHLVMADASVRHL. Residues 115-138 form a helical membrane-spanning segment; sequence DNVFDSMICISVVASMCSLLAIAV. At 139-155 the chain is on the cytoplasmic side; it reads DRYVTIFCALRYQRIMT. The chain crosses the membrane as a helical span at residues 156 to 179; the sequence is GRRSGAIIGGIWAFCASCGTVFIV. Topologically, residues 180 to 186 are extracellular; that stretch reads YYESTYV. A helical transmembrane segment spans residues 187–211; the sequence is VICLIAMFLTMLLLMASLYTHMFLL. The Cytoplasmic portion of the chain corresponds to 212-239; the sequence is ARTHIRRIATLPGHSSVRQRTGVKGAIT. Residues 240-265 traverse the membrane as a helical segment; sequence LAMLLGVFIVCWAPFFLHLILMISCP. Residues 266-273 are Extracellular-facing; sequence HNLYCSCF. The helical transmembrane segment at 274–297 threads the bilayer; sequence MSHFNMYLILIMCNSVIDPLIYAF. Residues 298–325 are Cytoplasmic-facing; that stretch reads RSQEMRKTFKEIVCFQSFRTPCRFPSRY. The S-palmitoyl cysteine moiety is linked to residue Cys-311.

The protein belongs to the G-protein coupled receptor 1 family.

The protein resides in the cell membrane. Its function is as follows. Receptor for MSH (alpha, beta and gamma) and ACTH. The activity of this receptor is mediated by G proteins which activate adenylate cyclase. This receptor is a possible mediator of the immunomodulation properties of melanocortins. This is Melanocortin receptor 5 (MC5R) from Bos taurus (Bovine).